The following is a 377-amino-acid chain: tRNA(Met) cytidine acetate ligase (377 aa).

ATP contacts are provided by residues 7-20 (ITEY…HLYH), Gly-101, Asn-152, and Arg-179.

It belongs to the TmcAL family.

The protein resides in the cytoplasm. It carries out the reaction cytidine(34) in elongator tRNA(Met) + acetate + ATP = N(4)-acetylcytidine(34) in elongator tRNA(Met) + AMP + diphosphate. Catalyzes the formation of N(4)-acetylcytidine (ac(4)C) at the wobble position of elongator tRNA(Met), using acetate and ATP as substrates. First activates an acetate ion to form acetyladenylate (Ac-AMP) and then transfers the acetyl group to tRNA to form ac(4)C34. The protein is tRNA(Met) cytidine acetate ligase of Oenococcus oeni (strain ATCC BAA-331 / PSU-1).